Reading from the N-terminus, the 344-residue chain is Anthranilate phosphoribosyltransferase (344 aa).

Residues Gly-84, 87-88 (GD), Thr-92, 94-97 (NIST), 112-120 (KHGGRSVSS), and Ser-124 each bind 5-phospho-alpha-D-ribose 1-diphosphate. Residue Gly-84 participates in anthranilate binding. Ser-96 contributes to the Mg(2+) binding site. Anthranilate is bound at residue Arg-170. Mg(2+) is bound by residues Asp-229 and Glu-230.

Belongs to the anthranilate phosphoribosyltransferase family. Homodimer. Requires Mg(2+) as cofactor.

The catalysed reaction is N-(5-phospho-beta-D-ribosyl)anthranilate + diphosphate = 5-phospho-alpha-D-ribose 1-diphosphate + anthranilate. It participates in amino-acid biosynthesis; L-tryptophan biosynthesis; L-tryptophan from chorismate: step 2/5. Its function is as follows. Catalyzes the transfer of the phosphoribosyl group of 5-phosphorylribose-1-pyrophosphate (PRPP) to anthranilate to yield N-(5'-phosphoribosyl)-anthranilate (PRA). This is Anthranilate phosphoribosyltransferase from Janthinobacterium sp. (strain Marseille) (Minibacterium massiliensis).